The following is a 357-amino-acid chain: tRNA-specific 2-thiouridylase MnmA (357 aa).

ATP-binding positions include 3–10 (AMSGGVDS) and L29. Catalysis depends on C98, which acts as the Nucleophile. Cysteines 98 and 196 form a disulfide. G122 contacts ATP. An interaction with tRNA region spans residues 146-148 (KDQ). Residue C196 is the Cysteine persulfide intermediate of the active site. The interaction with tRNA stretch occupies residues 302–303 (RY).

It belongs to the MnmA/TRMU family.

The protein resides in the cytoplasm. The enzyme catalyses S-sulfanyl-L-cysteinyl-[protein] + uridine(34) in tRNA + AH2 + ATP = 2-thiouridine(34) in tRNA + L-cysteinyl-[protein] + A + AMP + diphosphate + H(+). Functionally, catalyzes the 2-thiolation of uridine at the wobble position (U34) of tRNA, leading to the formation of s(2)U34. This Moorella thermoacetica (strain ATCC 39073 / JCM 9320) protein is tRNA-specific 2-thiouridylase MnmA.